Here is a 96-residue protein sequence, read N- to C-terminus: Large ribosomal subunit protein eL43 (96 aa).

The C4-type zinc finger occupies 41–62 (CPVCGFMKLKRISTSIWECKKC).

The protein belongs to the eukaryotic ribosomal protein eL43 family. The cofactor is Zn(2+).

This chain is Large ribosomal subunit protein eL43, found in Methanococcus aeolicus (strain ATCC BAA-1280 / DSM 17508 / OCM 812 / Nankai-3).